The sequence spans 923 residues: DNA mismatch repair protein PMS1 (923 aa).

Composition is skewed to basic and acidic residues over residues 543–553 (DMTPSERDSEL), 565–581 (NVERHEREHEKPIRFEE), and 591–601 (GDVERVSEDNP). The disordered stretch occupies residues 543–603 (DMTPSERDSE…ERVSEDNPRC (61 aa)).

The protein belongs to the DNA mismatch repair MutL/HexB family. In terms of assembly, heterodimer of MLH1 and PMS1, called MutLalpha, which is the major MMR MutL activity correcting base-base mismatches as well as IDLs. The heterodimer binds double strand DNA independently of a mismatch with positive cooperativity and has more than one DNA binding site. Forms a ternary complex with either the MSH2-MSH6 (MutSalpha) or the MSH2-MSH3 heterodimer (MutSbeta), which recognize and bind to mismatch DNA. Ternary complex formation is promoted by ATP binding. In terms of tissue distribution, expressed at very low levels in mature leaves. Detected in rapidly dividing tissues.

Its subcellular location is the nucleus. Required for DNA mismatch repair (MMR), correcting base-base mismatches and insertion-deletion loops (IDLs) resulting from DNA replication, DNA damage or from recombination events between non-identical sequences during meiosis. Component of the MutLalpha heterodimer that forms a ternary complex with the MutS heterodimers, which initially recognize the DNA mismatches. This complex is thought to be responsible for directing the downstream MMR events, including strand discrimination, excision, and resynthesis. Plays a major role in maintaining the genetic stability of simple sequence repeats and in the repair of heteroduplex sites present in meiotic recombination intermediates. Does not seem to be required for homologous somatic recombination. In Arabidopsis thaliana (Mouse-ear cress), this protein is DNA mismatch repair protein PMS1 (PMS1).